The primary structure comprises 2092 residues: RNA-directed RNA polymerase L (2092 aa).

Residues 18–215 (VPIKHFDCTM…ELSSTDEELG (198 aa)) form an endonuclease region. 3 residues coordinate Mn(2+): His-79, Asp-111, and Glu-125. The active-site For endonuclease activity is Lys-143. The RdRp catalytic domain maps to 975–1166 (ARKQCKGPVW…AICFRMKKEL (192 aa)). Asp-1134 serves as a coordination point for Mg(2+). The cap-binding stretch occupies residues 1706–1822 (GAGTVGGFIK…PFGCPVYIIK (117 aa)).

The protein belongs to the Bunyavirales RNA polymerase family. Homomultimer. Interacts with glycoprotein N; this interaction allows efficient polymerase packaging into virus particles. Interacts with nucleoprotein N. Mn(2+) is required as a cofactor. Mg(2+) serves as cofactor.

The protein localises to the host Golgi apparatus. It is found in the host endoplasmic reticulum. It localises to the host endoplasmic reticulum-Golgi intermediate compartment. Its subcellular location is the virion. It carries out the reaction RNA(n) + a ribonucleoside 5'-triphosphate = RNA(n+1) + diphosphate. RNA-dependent RNA polymerase, which is responsible for the replication and transcription of the viral RNA genome using antigenomic RNA as an intermediate. During transcription, synthesizes subgenomic RNAs and assures their capping by a cap-snatching mechanism, which involves the endonuclease activity cleaving the host capped pre-mRNAs. These short capped RNAs are then used as primers for viral transcription. The 3'-end of subgenomic mRNAs molecules are not polyadenylated. During replication, the polymerase binds the 5' and 3' vRNA extremities at distinct sites. In turn, significant conformational changes occur in the polymerase and in vRNA to initiate active RNA synthesis. As a consequence of the use of the same enzyme for both transcription and replication, these mechanisms need to be well coordinated. This is RNA-directed RNA polymerase L from Aedes (Bovine).